A 293-amino-acid chain; its full sequence is MINGSIVALITPMNSDGTVDNKSLENLVEYHIAQGTDGIVAVGTTGESATLPAKEHIQVVQQTVSFAAGRIPIIGGNGANATAEAIELTKGLSSVGVEAMLGVTPYYNKPSPKGLVAHYKAVAQSTDIPQILYNVPGRTSVDMLPETVAELASVSNIIGVKEATGDLSRVSKLRSLCGDDFLLYSGDDATAREFLTLGGNGIISVANNIVPKAFKAMCDAALAGNTEEAIAVEKSMQSLFSALFCEANPIPVKWAAHQMGLISKGEIRLPLTELSSEFHGLLLEAMKNARIEV.

Thr45 lines the pyruvate pocket. The Proton donor/acceptor role is filled by Tyr133. Lys161 functions as the Schiff-base intermediate with substrate in the catalytic mechanism. Ile203 serves as a coordination point for pyruvate.

This sequence belongs to the DapA family. In terms of assembly, homotetramer; dimer of dimers.

It is found in the cytoplasm. The catalysed reaction is L-aspartate 4-semialdehyde + pyruvate = (2S,4S)-4-hydroxy-2,3,4,5-tetrahydrodipicolinate + H2O + H(+). Its pathway is amino-acid biosynthesis; L-lysine biosynthesis via DAP pathway; (S)-tetrahydrodipicolinate from L-aspartate: step 3/4. Its function is as follows. Catalyzes the condensation of (S)-aspartate-beta-semialdehyde [(S)-ASA] and pyruvate to 4-hydroxy-tetrahydrodipicolinate (HTPA). This is 4-hydroxy-tetrahydrodipicolinate synthase from Shewanella piezotolerans (strain WP3 / JCM 13877).